Consider the following 382-residue polypeptide: MTVSGAIPSMTKNRTLVVGGTGFIGQFITKASLGFGYPTFLLVRPGPVSPSKAVIIKTFQDKGAKVIYGVINDKECMEKILKEYEIDVVISLVGGARLLDQLTLLEAIKSVKTIKRFLPSEFGHDVDRTDPVEPGLTMYKEKRLVRRAVEEYGIPFTNICCNSIASWPYYDNCHPSQVPPPMDQFQIYGDGNTKAYFIDGNDIGKFTMKTIDDIRTLNKNVHFRPSSNCYSINELASLWEKKIGRTLPRFTVTADKLLAHAAENIIPESIVSSFTHDIFINGCQVNFSIDEHSDVEIDTLYPDEKFRSLDDCYEDFVPMVHDKIHAGKSGEIKIKDGKPLVQTGTIEEINKDIKTLVETQPNEEIKKDMKALVEAVPISAMG.

NADP(+) contacts are provided by residues 19 to 25, Arg-44, and Lys-52; that span reads GGTGFIG. Lys-142 acts as the Proton acceptor in catalysis. NADP(+) is bound at residue Arg-146.

It belongs to the NmrA-type oxidoreductase family. Isoflavone reductase subfamily. As to quaternary structure, monomer.

The enzyme catalyses (2R,3S)-catechin + NADP(+) + H2O = (2R,3S,4S)-leucocyanidin + NADPH + H(+). The protein operates within flavonoid metabolism; proanthocyanidin biosynthesis. Its function is as follows. Catalyzes the synthesis of catechin from 3,4-cis-leucocyanidin. Also synthesizes afzelechin and gallocatechin. This chain is Leucoanthocyanidin reductase (LAR), found in Desmodium uncinatum (Silverleaf Spanish clover).